The sequence spans 246 residues: Ribonuclease 3 (246 aa).

An RNase III domain is found at Leu10 to Gly135. Residue Glu50 coordinates Mg(2+). The active site involves Asp54. Mg(2+)-binding residues include Asp121 and Glu124. The active site involves Glu124. One can recognise a DRBM domain in the interval Asp161–Ala230.

The protein belongs to the ribonuclease III family. As to quaternary structure, homodimer. The cofactor is Mg(2+).

It localises to the cytoplasm. It catalyses the reaction Endonucleolytic cleavage to 5'-phosphomonoester.. In terms of biological role, digests double-stranded RNA. Involved in the processing of primary rRNA transcript to yield the immediate precursors to the large and small rRNAs (23S and 16S). Processes some mRNAs, and tRNAs when they are encoded in the rRNA operon. Processes pre-crRNA and tracrRNA of type II CRISPR loci if present in the organism. This chain is Ribonuclease 3, found in Mycoplasma mobile (strain ATCC 43663 / 163K / NCTC 11711) (Mesomycoplasma mobile).